Reading from the N-terminus, the 273-residue chain is Large ribosomal subunit protein uL2cz/uL2cy (273 aa).

Disordered stretches follow at residues 1 to 22 (MAIHLYKTSTPSTRNGAVDSQV) and 223 to 254 (MNPVDHPHGGGEGRAPIGRKKPTTPWGYPALG).

This sequence belongs to the universal ribosomal protein uL2 family. Part of the 50S ribosomal subunit.

Its subcellular location is the plastid. It is found in the chloroplast. In Drimys granadensis, this protein is Large ribosomal subunit protein uL2cz/uL2cy (rpl2-A).